A 388-amino-acid chain; its full sequence is Phosphopentomutase (388 aa).

Mn(2+) contacts are provided by D10, D282, H287, D323, H324, and H335.

The protein belongs to the phosphopentomutase family. The cofactor is Mn(2+).

Its subcellular location is the cytoplasm. It catalyses the reaction 2-deoxy-alpha-D-ribose 1-phosphate = 2-deoxy-D-ribose 5-phosphate. The catalysed reaction is alpha-D-ribose 1-phosphate = D-ribose 5-phosphate. It participates in carbohydrate degradation; 2-deoxy-D-ribose 1-phosphate degradation; D-glyceraldehyde 3-phosphate and acetaldehyde from 2-deoxy-alpha-D-ribose 1-phosphate: step 1/2. Isomerase that catalyzes the conversion of deoxy-ribose 1-phosphate (dRib-1-P) and ribose 1-phosphate (Rib-1-P) to deoxy-ribose 5-phosphate (dRib-5-P) and ribose 5-phosphate (Rib-5-P), respectively. The sequence is that of Phosphopentomutase from Acetivibrio thermocellus (strain ATCC 27405 / DSM 1237 / JCM 9322 / NBRC 103400 / NCIMB 10682 / NRRL B-4536 / VPI 7372) (Clostridium thermocellum).